We begin with the raw amino-acid sequence, 660 residues long: Bifunctional polymyxin resistance protein ArnA (660 aa).

Residues 1-304 form a formyltransferase ArnAFT region; the sequence is MKTVVFAYHD…TLGLVQGSRL (304 aa). Position 86–88 (86–88) interacts with (6R)-10-formyltetrahydrofolate; that stretch reads HLI. The active-site Proton donor; for formyltransferase activity is His-104. (6R)-10-formyltetrahydrofolate contacts are provided by residues Arg-114 and 136-140; that span reads VTRAD. The interval 314 to 660 is dehydrogenase ArnADH; it reads RRTRVLILGV…RTVDLTDKPS (347 aa). Residues Asp-347 and 368 to 369 each bind NAD(+); that span reads DI. UDP-alpha-D-glucuronate contacts are provided by residues Ala-393, Tyr-398, and 432–433; that span reads TS. Residue Glu-434 is the Proton acceptor; for decarboxylase activity of the active site. UDP-alpha-D-glucuronate is bound by residues Arg-460, Asn-492, 526–535, and Tyr-613; that span reads KLIDGGKQKR. Arg-619 serves as the catalytic Proton donor; for decarboxylase activity.

This sequence in the N-terminal section; belongs to the Fmt family. UDP-L-Ara4N formyltransferase subfamily. It in the C-terminal section; belongs to the NAD(P)-dependent epimerase/dehydratase family. UDP-glucuronic acid decarboxylase subfamily. As to quaternary structure, homohexamer, formed by a dimer of trimers.

The catalysed reaction is UDP-alpha-D-glucuronate + NAD(+) = UDP-beta-L-threo-pentopyranos-4-ulose + CO2 + NADH. The enzyme catalyses UDP-4-amino-4-deoxy-beta-L-arabinose + (6R)-10-formyltetrahydrofolate = UDP-4-deoxy-4-formamido-beta-L-arabinose + (6S)-5,6,7,8-tetrahydrofolate + H(+). The protein operates within nucleotide-sugar biosynthesis; UDP-4-deoxy-4-formamido-beta-L-arabinose biosynthesis; UDP-4-deoxy-4-formamido-beta-L-arabinose from UDP-alpha-D-glucuronate: step 1/3. It participates in nucleotide-sugar biosynthesis; UDP-4-deoxy-4-formamido-beta-L-arabinose biosynthesis; UDP-4-deoxy-4-formamido-beta-L-arabinose from UDP-alpha-D-glucuronate: step 3/3. Its pathway is bacterial outer membrane biogenesis; lipopolysaccharide biosynthesis. In terms of biological role, bifunctional enzyme that catalyzes the oxidative decarboxylation of UDP-glucuronic acid (UDP-GlcUA) to UDP-4-keto-arabinose (UDP-Ara4O) and the addition of a formyl group to UDP-4-amino-4-deoxy-L-arabinose (UDP-L-Ara4N) to form UDP-L-4-formamido-arabinose (UDP-L-Ara4FN). The modified arabinose is attached to lipid A and is required for resistance to polymyxin and cationic antimicrobial peptides. This chain is Bifunctional polymyxin resistance protein ArnA, found in Shigella dysenteriae serotype 1 (strain Sd197).